The following is a 117-amino-acid chain: UPF0102 protein Rsph17029_0461 (117 aa).

Belongs to the UPF0102 family.

This chain is UPF0102 protein Rsph17029_0461, found in Cereibacter sphaeroides (strain ATCC 17029 / ATH 2.4.9) (Rhodobacter sphaeroides).